Reading from the N-terminus, the 444-residue chain is Trigger factor (444 aa).

The PPIase FKBP-type domain occupies 160 to 245; it reads DMQVTFDFEG…VKQVEKPKLP (86 aa).

It belongs to the FKBP-type PPIase family. Tig subfamily.

It is found in the cytoplasm. It carries out the reaction [protein]-peptidylproline (omega=180) = [protein]-peptidylproline (omega=0). Involved in protein export. Acts as a chaperone by maintaining the newly synthesized protein in an open conformation. Functions as a peptidyl-prolyl cis-trans isomerase. The protein is Trigger factor of Acinetobacter baumannii (strain AB0057).